Here is a 124-residue protein sequence, read N- to C-terminus: Fluoride-specific ion channel FluC (124 aa).

Helical transmembrane passes span 4-24 (IFYI…TTLV), 35-55 (YATF…FGYL), 63-83 (PYLK…FSAF), and 96-116 (ILIA…ATWT). Residues G75 and T78 each contribute to the Na(+) site.

The protein belongs to the fluoride channel Fluc/FEX (TC 1.A.43) family.

It is found in the cell inner membrane. It carries out the reaction fluoride(in) = fluoride(out). Na(+) is not transported, but it plays an essential structural role and its presence is essential for fluoride channel function. Fluoride-specific ion channel. Important for reducing fluoride concentration in the cell, thus reducing its toxicity. The chain is Fluoride-specific ion channel FluC from Flavobacterium psychrophilum (strain ATCC 49511 / DSM 21280 / CIP 103535 / JIP02/86).